The following is a 668-amino-acid chain: DNA mismatch repair protein MutL (668 aa).

It belongs to the DNA mismatch repair MutL/HexB family.

Functionally, this protein is involved in the repair of mismatches in DNA. It is required for dam-dependent methyl-directed DNA mismatch repair. May act as a 'molecular matchmaker', a protein that promotes the formation of a stable complex between two or more DNA-binding proteins in an ATP-dependent manner without itself being part of a final effector complex. This Limosilactobacillus reuteri (strain DSM 20016) (Lactobacillus reuteri) protein is DNA mismatch repair protein MutL.